A 491-amino-acid chain; its full sequence is uncharacterized protein (491 aa).

Transmembrane regions (helical) follow at residues 48 to 68 (LILVSAFALLGPMASSMVAPC), 85 to 105 (ALILSIYLLVFAISPMISAPL), 112 to 132 (RMLLQVGNVIFIVFNMACGLA), 140 to 160 (IFRFLAGFGSATPMGLGSGTI), 174 to 194 (AVMSLAPLLGPTIGPVVSGFI), 202 to 222 (WIFWSTTIFSGFIFALSLPLL), 277 to 297 (PIVILCSTYMAIQYGILYLVL), 317 to 337 (LNYIASGIGLIFGSQASGIFI), 358 to 378 (VPVILLGTFFFPAGLFIYGWT), 383 to 403 (THWIGPDIGAAMFNIGLMLGW), 408 to 428 (TYLIDSFMIYAASSTAVACCV), and 455 to 475 (LLAFIVLGSSIITCSLLWFGG).

This sequence belongs to the major facilitator superfamily.

It localises to the membrane. This is an uncharacterized protein from Schizosaccharomyces pombe (strain 972 / ATCC 24843) (Fission yeast).